Reading from the N-terminus, the 1098-residue chain is Bifunctional helicase and thymine dioxygenase JBP2 (1098 aa).

A thymine dioxygenase region spans residues 1–540 (MLNGLTRVST…PPLFVPTRLA (540 aa)). 3 residues coordinate Fe cation: His415, Asp417, and His465. Position 479 (Arg479) interacts with 2-oxoglutarate. The interval 541–1098 (SHLAPVQLAA…RYQESVRESE (558 aa)) is DNA Helicase. Residues 555–730 (VERTEKQSGC…YRLVGWVNKG (176 aa)) enclose the Helicase ATP-binding domain. 568-575 (MTMGLGKT) is a binding site for ATP. A DEAH box motif is present at residues 681-684 (DEGH). A Helicase C-terminal domain is found at 897 to 1057 (VLVDIVLRVQ…ALPDELEDCA (161 aa)).

In the C-terminal section; belongs to the SNF2/RAD54 helicase family. The protein in the N-terminal section; belongs to the TET family. JBP2 subfamily. The cofactor is Fe(2+).

The protein localises to the nucleus. The catalysed reaction is ATP + H2O = ADP + phosphate + H(+). The enzyme catalyses thymine + 2-oxoglutarate + O2 = 5-hydroxymethyluracil + succinate + CO2. In terms of biological role, dioxygenase that catalyzes the first step of DNA base J (beta-d-glucosyl-HOMedU) biosynthesis by converting thymine to 5-hydroxymethyluracil (HOMedU). DNA base J is a hypermodified thymidine residue found in the genome of kinetoplastid parasites, which is localized primarily to repetitive DNA, namely the telomeres, and is implicated in the regulation of antigenic variation. Probably also acts as a DNA helicase. Recognizes and binds specific regions of the genome, hydrolyzes ATP and allows the DNA base J de novo synthesis. Involved in initial synthesis of DNA base J, JBP1 being able to act via the basal level of DNA base J and propagate further synthesis. In contrast to JBP1, it does not specifically bind DNA base J, however it binds chromatin. The protein is Bifunctional helicase and thymine dioxygenase JBP2 (JBP2) of Leishmania major.